Here is a 1182-residue protein sequence, read N- to C-terminus: Protein patched homolog 2 (1182 aa).

The Cytoplasmic portion of the chain corresponds to 1–57 (MVRPLSLGELPPSYTPPARSSAPHILAGSLQAPLWLRAYFQGLLFSLGCRIQKHCGK). A helical transmembrane segment spans residues 58 to 78 (VLFLGLVAFGALALGLRVAVI). The Extracellular segment spans residues 79 to 394 (ETDLEQLWVE…DILRAFSEVS (316 aa)). Asn-370 carries an N-linked (GlcNAc...) asparagine glycan. The SSD domain maps to 394-552 (STTRVVGGYL…MLVFPAILSL (159 aa)). A helical transmembrane segment spans residues 395 to 414 (TTRVVGGYLLMLAYACVTML). Residues 415 to 428 (RWDCAQSQGAVGLA) lie on the Cytoplasmic side of the membrane. The chain crosses the membrane as a helical span at residues 429-449 (GVLLVALAVASGLGLCALLGI). At 450–457 (TFNAATTQ) the chain is on the extracellular side. The helical transmembrane segment at 458-478 (VLPFLALGIGVDDIFLLAHAF) threads the bilayer. The Cytoplasmic portion of the chain corresponds to 479 to 501 (TKAPPDTPLPERMGECLRSTGTS). The helical transmembrane segment at 502–522 (VALTSVNNMVAFFMAALVPIP) threads the bilayer. Residues 523–531 (ALRAFSLQA) are Extracellular-facing. The helical transmembrane segment at 532–552 (AIVVGCNFAAVMLVFPAILSL) threads the bilayer. Residues 553–686 (DLRRRHRQRL…APLLLQTRAK (134 aa)) are Cytoplasmic-facing. The chain crosses the membrane as a helical span at residues 687 to 707 (ALVLLFFGALLGLSLYGATLV). Residues 708–963 (QDGLALTDVV…WEQYLGLRRC (256 aa)) lie on the Extracellular side of the membrane. A glycan (N-linked (GlcNAc...) asparagine) is linked at Asn-812. The chain crosses the membrane as a helical span at residues 964–984 (FLLAVCILLVCTFLVCALLLL). At 985–991 (SPWTAGL) the chain is on the cytoplasmic side. Residues 992–1012 (IVLVLAMMTVELFGIMGFLGI) form a helical membrane-spanning segment. Position 1013 (Lys-1013) is a topological domain, extracellular. Residues 1014-1034 (LSAIPVVILVASIGIGVEFTV) traverse the membrane as a helical segment. The Cytoplasmic segment spans residues 1035–1064 (HVALGFLTSHGSRNLRAASALEQTFAPVTD). A helical membrane pass occupies residues 1065-1085 (GAVSTLLGLLMLAGSNFDFII). Arg-1086 is a topological domain (extracellular). The chain crosses the membrane as a helical span at residues 1087–1107 (YFFVVLTVLTLLGLLHGLLLL). Residues 1108–1182 (PVLLSILGPP…YVHPASEEPT (75 aa)) lie on the Cytoplasmic side of the membrane.

Belongs to the patched family. Expressed in epithelial cells of the developing hair, tooth and whisker.

Its subcellular location is the membrane. Its function is as follows. Plays a role in the control of cellular growth. May have a role in epidermal development. May act as a receptor for Sonic hedgehog (SHH). This Mus musculus (Mouse) protein is Protein patched homolog 2 (Ptch2).